The primary structure comprises 318 residues: Beta-ketoacyl-[acyl-carrier-protein] synthase III (318 aa).

Residues Cys112 and His245 contribute to the active site. The segment at Gln246–Arg250 is ACP-binding. Asn275 is a catalytic residue.

This sequence belongs to the thiolase-like superfamily. FabH family. Homodimer.

The protein localises to the cytoplasm. It carries out the reaction malonyl-[ACP] + acetyl-CoA + H(+) = 3-oxobutanoyl-[ACP] + CO2 + CoA. It participates in lipid metabolism; fatty acid biosynthesis. Catalyzes the condensation reaction of fatty acid synthesis by the addition to an acyl acceptor of two carbons from malonyl-ACP. Catalyzes the first condensation reaction which initiates fatty acid synthesis and may therefore play a role in governing the total rate of fatty acid production. Possesses both acetoacetyl-ACP synthase and acetyl transacylase activities. Its substrate specificity determines the biosynthesis of branched-chain and/or straight-chain of fatty acids. The chain is Beta-ketoacyl-[acyl-carrier-protein] synthase III from Nitrosomonas europaea (strain ATCC 19718 / CIP 103999 / KCTC 2705 / NBRC 14298).